We begin with the raw amino-acid sequence, 168 residues long: G/U mismatch-specific DNA glycosylase (168 aa).

The protein belongs to the uracil-DNA glycosylase (UDG) superfamily. TDG/mug family. In terms of assembly, binds DNA as a monomer.

The protein resides in the cytoplasm. The enzyme catalyses Specifically hydrolyzes mismatched double-stranded DNA and polynucleotides, releasing free uracil.. Its function is as follows. Excises ethenocytosine and uracil, which can arise by alkylation or deamination of cytosine, respectively, from the corresponding mispairs with guanine in ds-DNA. It is capable of hydrolyzing the carbon-nitrogen bond between the sugar-phosphate backbone of the DNA and the mispaired base. The complementary strand guanine functions in substrate recognition. Required for DNA damage lesion repair in stationary-phase cells. The polypeptide is G/U mismatch-specific DNA glycosylase (Escherichia coli (strain UTI89 / UPEC)).